The primary structure comprises 502 residues: Carbon catabolite-derepressing protein kinase (502 aa).

One can recognise a Protein kinase domain in the interval 14 to 269; sequence YYLGKILGVG…IGEIRKHSWF (256 aa). ATP is bound by residues 20 to 28 and Lys43; that span reads LGVGTFAKV. Residue Asp140 is the Proton acceptor of the active site. Thr173 carries the post-translational modification Phosphothreonine; by autocatalysis. The UBA domain occupies 290 to 330; that stretch reads MIDEDTLRDVVKLGYDKDHVCESLCNRLQNEETVAYYLLLD. In terms of domain architecture, KA1 spans 453-501; sequence NSRLPAVIKFEIQLYKTKDDKYLLDMQRVTGPQLLFLEFCAAFLTNLRV.

Belongs to the protein kinase superfamily. CAMK Ser/Thr protein kinase family. SNF1 subfamily.

It catalyses the reaction L-seryl-[protein] + ATP = O-phospho-L-seryl-[protein] + ADP + H(+). The enzyme catalyses L-threonyl-[protein] + ATP = O-phospho-L-threonyl-[protein] + ADP + H(+). Essential for release from glucose repression. In Secale cereale (Rye), this protein is Carbon catabolite-derepressing protein kinase (RKIN1).